The sequence spans 250 residues: Type III pantothenate kinase (250 aa).

6-13 is a binding site for ATP; that stretch reads DVGNTNTV. Residue 103-106 coordinates substrate; it reads GADR. D105 serves as the catalytic Proton acceptor. A K(+)-binding site is contributed by D125. T128 lines the ATP pocket. T180 is a binding site for substrate.

The protein belongs to the type III pantothenate kinase family. In terms of assembly, homodimer. NH4(+) serves as cofactor. The cofactor is K(+).

Its subcellular location is the cytoplasm. It catalyses the reaction (R)-pantothenate + ATP = (R)-4'-phosphopantothenate + ADP + H(+). It functions in the pathway cofactor biosynthesis; coenzyme A biosynthesis; CoA from (R)-pantothenate: step 1/5. Catalyzes the phosphorylation of pantothenate (Pan), the first step in CoA biosynthesis. The sequence is that of Type III pantothenate kinase from Frankia casuarinae (strain DSM 45818 / CECT 9043 / HFP020203 / CcI3).